A 435-amino-acid chain; its full sequence is Protein lin-54 (435 aa).

The disordered stretch occupies residues 73-136 (DEPIDTSSHR…PASLPRTVQP (64 aa)). Positions 102 to 120 (TPGSSQYTVRNLSNLSGSP) are enriched in polar residues. The region spanning 173-288 (QRKPCNCTKS…KCKGCQNTET (116 aa)) is the CRC domain. Positions 175 to 188 (KPCNCTKSQCLKLY) are DNA-binding. Positions 177, 179, 184, 189, 191, 198, 201, 203, and 206 each coordinate Zn(2+). The interval 235-250 (IGIARGGITDIERLHQ) is linker. Zn(2+) contacts are provided by cysteine 253, cysteine 255, cysteine 260, cysteine 265, cysteine 267, cysteine 274, cysteine 278, cysteine 280, and cysteine 283. Residues 253 to 266 (CHCKKSGCLKNYCE) are DNA-binding. The disordered stretch occupies residues 415-435 (LTQDLDAAPTDDIPGPSTSTS).

Belongs to the lin-54 family. In terms of assembly, component of the DRM complex, at least composed of lin-9, lin-35, lin-37, lin-52, lin-53, lin-54- dpl-1 and efl-1.

The protein localises to the nucleus. It is found in the chromosome. Its function is as follows. Synthetic multivulva class B (synMuvB) protein. SynMuvB proteins are required to repress the induction of vulval development by Ras signaling and probably act by forming the multiprotein DRM complex that repress transcription. The polypeptide is Protein lin-54 (Caenorhabditis elegans).